The following is a 335-amino-acid chain: MASPRWLWCVCATAAVTLLLVSKVPSASAQRKKEKVLVEKVIQLMEWTNQRPVIRMNGDKFRPLVKAPPRNYSVIVMFTALQLHRQCVVCKQADEEFQILANFWRYSSAFTNRIFFAMVDFDEGSDVFQMLNMNSAPTFINFPPKGKPKRADTYELQVRGFSAEQIARWIADRTDVNIRVIRPPNYAGPLMLGLLLAVIGGLVYLRRSNMEFLFNKTGWAFAALCFVLAMTSGQMWNHIRGPPYAHKNPHTGHVNYIHGSSQAQFVAETHIVLLFNGGVTLGMVLLCEAAASDMDIGKRRMMCIAGIGLVVLFFSWMLSIFRSKYHGYPYSFLMS.

The signal sequence occupies residues 1-29 (MASPRWLWCVCATAAVTLLLVSKVPSASA). At 30–184 (QRKKEKVLVE…DVNIRVIRPP (155 aa)) the chain is on the extracellular side. A Thioredoxin domain is found at 47-175 (WTNQRPVIRM…IARWIADRTD (129 aa)). Asn71 is a glycosylation site (N-linked (GlcNAc...) asparagine). Cys87 and Cys90 are oxidised to a cystine. A helical transmembrane segment spans residues 185–205 (NYAGPLMLGLLLAVIGGLVYL). The Cytoplasmic portion of the chain corresponds to 206–209 (RRSN). A helical transmembrane segment spans residues 210–230 (MEFLFNKTGWAFAALCFVLAM). Over 231 to 270 (TSGQMWNHIRGPPYAHKNPHTGHVNYIHGSSQAQFVAETH) the chain is Extracellular. The helical transmembrane segment at 271–291 (IVLLFNGGVTLGMVLLCEAAA) threads the bilayer. Residues 292–300 (SDMDIGKRR) lie on the Cytoplasmic side of the membrane. The helical transmembrane segment at 301 to 321 (MMCIAGIGLVVLFFSWMLSIF) threads the bilayer. Residues 322–335 (RSKYHGYPYSFLMS) lie on the Extracellular side of the membrane.

Belongs to the OST3/OST6 family. As to quaternary structure, accessory component of the STT3B-containing form of the oligosaccharyltransferase (OST) complex. OST exists in two different complex forms which contain common core subunits RPN1, RPN2, OST48, OST4, DAD1 and TMEM258, either STT3A or STT3B as catalytic subunits, and form-specific accessory subunits. OST can form stable complexes with the Sec61 complex or with both the Sec61 and TRAP complexes. The association of TUSC3 or MAGT1 with the STT3B-containing complex seems to be mutually exclusvice.

It localises to the cell membrane. It is found in the endoplasmic reticulum. Its subcellular location is the endoplasmic reticulum membrane. It functions in the pathway protein modification; protein glycosylation. Functionally, accessory component of the STT3B-containing form of the N-oligosaccharyl transferase (OST) complex which catalyzes the transfer of a high mannose oligosaccharide from a lipid-linked oligosaccharide donor to an asparagine residue within an Asn-X-Ser/Thr consensus motif in nascent polypeptide chains. Involved in N-glycosylation of STT3B-dependent substrates. Specifically required for the glycosylation of a subset of acceptor sites that are near cysteine residues; in this function seems to act redundantly with TUSC3. In its oxidized form proposed to form transient mixed disulfides with a glycoprotein substrate to facilitate access of STT3B to the unmodified acceptor site. Also has oxidoreductase-independent functions in the STT3B-containing OST complex possibly involving substrate recognition. Could indirectly play a role in Mg(2+) transport in epithelial cells. The protein is Dolichyl-diphosphooligosaccharide--protein glycosyltransferase subunit MAGT1 of Rattus norvegicus (Rat).